The sequence spans 87 residues: UPF0213 protein SSA_0709 (87 aa).

The GIY-YIG domain maps to 3–78; it reads NKAYMYVLEC…KKKTRQAKLA (76 aa).

This sequence belongs to the UPF0213 family.

This Streptococcus sanguinis (strain SK36) protein is UPF0213 protein SSA_0709.